The chain runs to 64 residues: Alpha-mammal toxin Lqq5 (64 aa).

Positions 2 to 64 constitute an LCN-type CS-alpha/beta domain; that stretch reads KDGYIVDDKN…VSIKEKGRCN (63 aa). Intrachain disulfides connect Cys-12–Cys-63, Cys-16–Cys-36, Cys-22–Cys-46, and Cys-26–Cys-48. An Asparagine amide modification is found at Asn-64.

This sequence belongs to the long (4 C-C) scorpion toxin superfamily. Sodium channel inhibitor family. Alpha subfamily. As to expression, expressed by the venom gland.

The protein resides in the secreted. Its function is as follows. Alpha toxins bind voltage-independently at site-3 of sodium channels (Nav) and inhibit the inactivation of the activated channels, thereby blocking neuronal transmission. Is active on mammals and bind with high affinity to rat brain synaptosome. Does not display phospholipid-binding activity. This chain is Alpha-mammal toxin Lqq5, found in Leiurus quinquestriatus quinquestriatus (Egyptian scorpion).